A 514-amino-acid chain; its full sequence is Peptide chain release factor 3 (514 aa).

Residues 8–268 enclose the tr-type G domain; the sequence is KKRRTFAIIS…TFLKFAPEPH (261 aa). GTP-binding positions include 17–24, 85–89, and 139–142; these read SHPDAGKT, DTPGH, and NKLD.

The protein belongs to the TRAFAC class translation factor GTPase superfamily. Classic translation factor GTPase family. PrfC subfamily.

It localises to the cytoplasm. Increases the formation of ribosomal termination complexes and stimulates activities of RF-1 and RF-2. It binds guanine nucleotides and has strong preference for UGA stop codons. It may interact directly with the ribosome. The stimulation of RF-1 and RF-2 is significantly reduced by GTP and GDP, but not by GMP. This is Peptide chain release factor 3 from Streptococcus sanguinis (strain SK36).